The primary structure comprises 343 residues: Dual-specificity RNA methyltransferase RlmN (343 aa).

E92 serves as the catalytic Proton acceptor. Residues 98–325 form the Radical SAM core domain; the sequence is DEDRTTLCIS…VITRSSRGSD (228 aa). A disulfide bond links C105 and C330. [4Fe-4S] cluster is bound by residues C112, C116, and C119. Residues 157 to 158, S189, 211 to 213, and N287 each bind S-adenosyl-L-methionine; these read GE and SLN. C330 serves as the catalytic S-methylcysteine intermediate.

It belongs to the radical SAM superfamily. RlmN family. [4Fe-4S] cluster serves as cofactor.

The protein resides in the cytoplasm. It catalyses the reaction adenosine(2503) in 23S rRNA + 2 reduced [2Fe-2S]-[ferredoxin] + 2 S-adenosyl-L-methionine = 2-methyladenosine(2503) in 23S rRNA + 5'-deoxyadenosine + L-methionine + 2 oxidized [2Fe-2S]-[ferredoxin] + S-adenosyl-L-homocysteine. It carries out the reaction adenosine(37) in tRNA + 2 reduced [2Fe-2S]-[ferredoxin] + 2 S-adenosyl-L-methionine = 2-methyladenosine(37) in tRNA + 5'-deoxyadenosine + L-methionine + 2 oxidized [2Fe-2S]-[ferredoxin] + S-adenosyl-L-homocysteine. Functionally, specifically methylates position 2 of adenine 2503 in 23S rRNA and position 2 of adenine 37 in tRNAs. m2A2503 modification seems to play a crucial role in the proofreading step occurring at the peptidyl transferase center and thus would serve to optimize ribosomal fidelity. The chain is Dual-specificity RNA methyltransferase RlmN from Geotalea uraniireducens (strain Rf4) (Geobacter uraniireducens).